The sequence spans 247 residues: Serine/threonine-protein phosphatase 2A activator (247 aa).

The protein belongs to the PTPA-type PPIase family.

It is found in the cytoplasm. It carries out the reaction [protein]-peptidylproline (omega=180) = [protein]-peptidylproline (omega=0). In terms of biological role, PPIases accelerate the folding of proteins. It catalyzes the cis-trans isomerization of proline imidic peptide bonds in oligopeptides. Acts as a regulatory subunit for PP2A-like phosphatases modulating their activity or substrate specificity, probably by inducing a conformational change in the catalytic subunit, a direct target of the PPIase. Can reactivate inactive phosphatase PP2A-phosphatase methylesterase complexes (PP2Ai) in presence of ATP and Mg(2+) by dissociating the inactive form from the complex. The polypeptide is Serine/threonine-protein phosphatase 2A activator (Encephalitozoon cuniculi (strain GB-M1) (Microsporidian parasite)).